The following is a 347-amino-acid chain: Haptoglobin (347 aa).

A signal peptide spans 1 to 18 (MSALGAVIALLLWGQLFA). The 58-residue stretch at 31-88 (DGCPKPPEIANGYVEHLVRYQCKKYYRLRTEGDGVYTLNNEKQWTNKAVGDKLPECEA) folds into the Sushi domain. 4 cysteine pairs are disulfide-bonded: Cys-52/Cys-86, Cys-90/Cys-207, Cys-250/Cys-281, and Cys-292/Cys-322. The Peptidase S1 domain occupies 103–345 (ILGGHLDAKG…IQDWVQKTIA (243 aa)). N-linked (GlcNAc...) asparagine glycosylation is found at Asn-125, Asn-148, Asn-152, and Asn-182. Residues 259–264 (VPEKKT) form an interaction with CD163 region.

It belongs to the peptidase S1 family. In terms of assembly, tetramer of two alpha and two beta chains; disulfide-linked. The hemoglobin/haptoglobin complex is composed of a haptoglobin dimer bound to two hemoglobin alpha-beta dimers. Interacts with CD163. Interacts with ERGIC3. Expressed by the liver and secreted in plasma.

The protein localises to the secreted. In terms of biological role, as a result of hemolysis, hemoglobin is found to accumulate in the kidney and is secreted in the urine. Haptoglobin captures, and combines with free plasma hemoglobin to allow hepatic recycling of heme iron and to prevent kidney damage. Haptoglobin also acts as an antioxidant, has antibacterial activity and plays a role in modulating many aspects of the acute phase response. Hemoglobin/haptoglobin complexes are rapidly cleared by the macrophage CD163 scavenger receptor expressed on the surface of liver Kupfer cells through an endocytic lysosomal degradation pathway. In Ateles geoffroyi (Black-handed spider monkey), this protein is Haptoglobin (HP).